Consider the following 430-residue polypeptide: Serine--tRNA ligase (430 aa).

237–239 (TAE) provides a ligand contact to L-serine. Residue 268 to 270 (RSE) participates in ATP binding. Glu291 contributes to the L-serine binding site. Residue 355 to 358 (EISS) coordinates ATP. Ser391 lines the L-serine pocket.

This sequence belongs to the class-II aminoacyl-tRNA synthetase family. Type-1 seryl-tRNA synthetase subfamily. As to quaternary structure, homodimer. The tRNA molecule binds across the dimer.

It localises to the cytoplasm. It carries out the reaction tRNA(Ser) + L-serine + ATP = L-seryl-tRNA(Ser) + AMP + diphosphate + H(+). The enzyme catalyses tRNA(Sec) + L-serine + ATP = L-seryl-tRNA(Sec) + AMP + diphosphate + H(+). It functions in the pathway aminoacyl-tRNA biosynthesis; selenocysteinyl-tRNA(Sec) biosynthesis; L-seryl-tRNA(Sec) from L-serine and tRNA(Sec): step 1/1. Functionally, catalyzes the attachment of serine to tRNA(Ser). Is also able to aminoacylate tRNA(Sec) with serine, to form the misacylated tRNA L-seryl-tRNA(Sec), which will be further converted into selenocysteinyl-tRNA(Sec). The chain is Serine--tRNA ligase from Yersinia pseudotuberculosis serotype O:1b (strain IP 31758).